Consider the following 125-residue polypeptide: MWLSILAIFCGAGLGALLRTGFNLLSVGVASVIPLGTLISNMVGGYLIGIALAFFGNNPHLSPEWKLLIITGFLGGLTTFSSFSAEVVTMIQRGEFTWALGTALLHLVGSLVLTLLGIWTYQAIK.

The next 4 membrane-spanning stretches (helical) occupy residues Trp2–Phe22, Leu35–Phe55, Leu68–Val88, and Trp98–Ile118. 2 residues coordinate Na(+): Gly75 and Thr78.

It belongs to the fluoride channel Fluc/FEX (TC 1.A.43) family.

The protein resides in the cell inner membrane. It carries out the reaction fluoride(in) = fluoride(out). Its activity is regulated as follows. Na(+) is not transported, but it plays an essential structural role and its presence is essential for fluoride channel function. Fluoride-specific ion channel. Important for reducing fluoride concentration in the cell, thus reducing its toxicity. In Polynucleobacter asymbioticus (strain DSM 18221 / CIP 109841 / QLW-P1DMWA-1) (Polynucleobacter necessarius subsp. asymbioticus), this protein is Fluoride-specific ion channel FluC.